The primary structure comprises 263 residues: uncharacterized protein (263 aa).

This sequence belongs to the AtsA family.

The protein resides in the plastid. It is found in the chloroplast. This is an uncharacterized protein from Porphyra purpurea (Red seaweed).